The chain runs to 185 residues: Ribosome-recycling factor (185 aa).

The tract at residues 136–155 is disordered; the sequence is NDDLKKLEKNGDITEDELRA.

This sequence belongs to the RRF family.

It is found in the cytoplasm. Responsible for the release of ribosomes from messenger RNA at the termination of protein biosynthesis. May increase the efficiency of translation by recycling ribosomes from one round of translation to another. This chain is Ribosome-recycling factor, found in Bacillus velezensis (strain DSM 23117 / BGSC 10A6 / LMG 26770 / FZB42) (Bacillus amyloliquefaciens subsp. plantarum).